The primary structure comprises 323 residues: Lipoyl synthase (323 aa).

C53, C58, C64, C79, C83, C86, and S293 together coordinate [4Fe-4S] cluster. A Radical SAM core domain is found at 65-282 (WTKKQATVMI…AATARAKGFS (218 aa)).

The protein belongs to the radical SAM superfamily. Lipoyl synthase family. Requires [4Fe-4S] cluster as cofactor.

It is found in the cytoplasm. It catalyses the reaction [[Fe-S] cluster scaffold protein carrying a second [4Fe-4S](2+) cluster] + N(6)-octanoyl-L-lysyl-[protein] + 2 oxidized [2Fe-2S]-[ferredoxin] + 2 S-adenosyl-L-methionine + 4 H(+) = [[Fe-S] cluster scaffold protein] + N(6)-[(R)-dihydrolipoyl]-L-lysyl-[protein] + 4 Fe(3+) + 2 hydrogen sulfide + 2 5'-deoxyadenosine + 2 L-methionine + 2 reduced [2Fe-2S]-[ferredoxin]. The protein operates within protein modification; protein lipoylation via endogenous pathway; protein N(6)-(lipoyl)lysine from octanoyl-[acyl-carrier-protein]: step 2/2. Its function is as follows. Catalyzes the radical-mediated insertion of two sulfur atoms into the C-6 and C-8 positions of the octanoyl moiety bound to the lipoyl domains of lipoate-dependent enzymes, thereby converting the octanoylated domains into lipoylated derivatives. The sequence is that of Lipoyl synthase from Zymomonas mobilis subsp. mobilis (strain ATCC 31821 / ZM4 / CP4).